We begin with the raw amino-acid sequence, 439 residues long: C4-dicarboxylate transport protein (439 aa).

9 helical membrane-spanning segments follow: residues 9–29 (SLYAQVIVAIIIGVLLGHFLP), 45–65 (LIKMIIAPVIFCTVVIGIAGM), 77–97 (LALLYFEVMSTVALLVGLIIV), 145–165 (AFAKGDVLQVLLVSVLFGFAL), 185–205 (VLFTIVGFIMRAAPVGAFGAM), 223–243 (LMGAFYLTCLFFIFVVLGIVT), 290–310 (VVGLVIPTGYSFNLDGTAIYL), 332–352 (TLLAVLLLTSKGAAGITGSGF), and 353–373 (IVLAATLSAVGHVPVAGLALI). The segment at 417 to 439 (NESPQAADQPEKILDQTNTKLGA) is disordered.

It belongs to the dicarboxylate/amino acid:cation symporter (DAACS) (TC 2.A.23) family.

The protein localises to the cell inner membrane. Responsible for the transport of dicarboxylates such as succinate, fumarate, and malate from the periplasm across the membrane. This is C4-dicarboxylate transport protein from Janthinobacterium sp. (strain Marseille) (Minibacterium massiliensis).